The sequence spans 333 residues: L-lactate dehydrogenase A chain (333 aa).

NAD(+) is bound by residues 30 to 58 and arginine 100; that span reads GAVGMACAMSILMKDLADELALVDVIEDK. Positions 107, 139, and 170 each coordinate substrate. Residue asparagine 139 coordinates NAD(+). Histidine 194 serves as the catalytic Proton acceptor. Threonine 249 is a substrate binding site.

It belongs to the LDH/MDH superfamily. LDH family. In terms of assembly, homotetramer.

Its subcellular location is the cytoplasm. The enzyme catalyses (S)-lactate + NAD(+) = pyruvate + NADH + H(+). It functions in the pathway fermentation; pyruvate fermentation to lactate; (S)-lactate from pyruvate: step 1/1. Its function is as follows. Interconverts simultaneously and stereospecifically pyruvate and lactate with concomitant interconversion of NADH and NAD(+). The protein is L-lactate dehydrogenase A chain (LDHA) of Ambystoma mexicanum (Axolotl).